We begin with the raw amino-acid sequence, 295 residues long: Protease HtpX homolog (295 aa).

Transmembrane regions (helical) follow at residues Ile6–Val26 and Leu40–Leu60. His148 lines the Zn(2+) pocket. Residue Glu149 is part of the active site. Residue His152 participates in Zn(2+) binding. Helical transmembrane passes span Leu163 to Leu183 and Ile198 to Phe218. Glu223 is a Zn(2+) binding site.

This sequence belongs to the peptidase M48B family. The cofactor is Zn(2+).

The protein resides in the cell inner membrane. This Leptospira borgpetersenii serovar Hardjo-bovis (strain JB197) protein is Protease HtpX homolog.